A 596-amino-acid polypeptide reads, in one-letter code: Aspartic proteinase MKC7 (596 aa).

The first 22 residues, 1-22 (MKLSVLTFVVDALLVCSSIVDA), serve as a signal peptide directing secretion. The propeptide occupies 23–65 (GVTDFPSLPSNEVYVKMNFQKKYGSSFENALDDTKGRTRLMTR). The 388-residue stretch at 81-468 (YSVELDIGTP…DLDNMEISMA (388 aa)) folds into the Peptidase A1 domain. Asp-99 is an active-site residue. Residues Asn-180, Asn-190, Asn-219, Asn-229, Asn-232, Asn-286, and Asn-346 are each glycosylated (N-linked (GlcNAc...) asparagine). Asp-360 is a catalytic residue. N-linked (GlcNAc...) asparagine glycosylation is found at Asn-471 and Asn-517. The span at 530–570 (ATSSSSSKGQKTQTSTTALSISKSTSSTSSTGMLSPTSSSS) shows a compositional bias: low complexity. A disordered region spans residues 530-578 (ATSSSSSKGQKTQTSTTALSISKSTSSTSSTGMLSPTSSSSTRKENGGH). Asn-575 carries GPI-anchor amidated asparagine lipidation. The propeptide at 576-596 (GGHNLNPPFFARFITAIFHHI) is removed in mature form.

The protein belongs to the peptidase A1 family.

The protein resides in the cell membrane. The catalysed reaction is Hydrolyzes various precursor proteins with Arg or Lys in P1, and commonly Arg or Lys also in P2. The P3 amino acid is usually non-polar, but otherwise additional basic amino acids are favorable in both non-prime and prime positions.. Its function is as follows. Cleaves proteins C-terminally to the most C-terminal basic residue. Can process the alpha-mating factor precursor. Required for cell wall integrity. This Saccharomyces cerevisiae (strain ATCC 204508 / S288c) (Baker's yeast) protein is Aspartic proteinase MKC7 (MKC7).